The primary structure comprises 131 residues: Small ribosomal subunit protein uS11 (131 aa).

It belongs to the universal ribosomal protein uS11 family. As to quaternary structure, part of the 30S ribosomal subunit. Interacts with proteins S7 and S18. Binds to IF-3.

Its function is as follows. Located on the platform of the 30S subunit, it bridges several disparate RNA helices of the 16S rRNA. Forms part of the Shine-Dalgarno cleft in the 70S ribosome. The sequence is that of Small ribosomal subunit protein uS11 from Wolinella succinogenes (strain ATCC 29543 / DSM 1740 / CCUG 13145 / JCM 31913 / LMG 7466 / NCTC 11488 / FDC 602W) (Vibrio succinogenes).